The primary structure comprises 651 residues: MAAAAALSGAGAPPAGGGAGGGGSPPGGWAVARLEGREFEYLMKKRSVTIGRNSSQGSVDVSMGHSSFISRRHLEIFTPPGGGHSAAAPEPAQPRPDAGGDFYLRCLGKNGVFVDGVFQRRGAPPLQLPRVCTFRFPSTNIKITFTALSSEKREKQEAPESPVKPVQPHISPLTINIPDTMAHLISPLPSPTGTISAANSCPSSPRGAGSSGYKVGRVMPSDLSLMADNSQPENEKEASGGDSPKDDSKPPYSYAQLIVQAITMAPDKQLTLNGIYTHITKNYPYYRTADKGWQNSIRHNLSLNRYFIKVPRSQEEPGKGSFWRIDPASESKLVEQAFRKRRPRGVPCFRTPLGPLSSRSAPASPNHAGVLSAHSSGAQTPESLSREGSPAPLEPEPGASQPKLAVIQEARFAQSAPGSPLSSQPVLITVQRQLPPAIKPVTYTVATPVTTPTSQPPVVQTVHVVHQIPAVSVTSVAGLAPANTYTVAGQAVVTQAAVLAPPNPEPQENGDHREVRVKVEPVPAISPATLGAASRIIQTSQGTPVQTVTIVQQAPLGQHQLPIKTVTQNGAHVVPMPTAVHSQVNNAAASPLHMLATHASASASLPTKRQNGDQAEQPELKRVKAEDGESIVIALSVDAPPAAVREKAIQN.

A compositionally biased stretch (low complexity) spans 1 to 13 (MAAAAALSGAGAP). The segment at 1 to 29 (MAAAAALSGAGAPPAGGGAGGGGSPPGGW) is disordered. Residues 14-26 (PAGGGAGGGGSPP) show a composition bias toward gly residues. S24 bears the Phosphoserine mark. Residues 48–119 (VTIGRNSSQG…NGVFVDGVFQ (72 aa)) enclose the FHA domain. The segment at 120-162 (RRGAPPLQLPRVCTFRFPSTNIKITFTALSSEKREKQEAPESP) is required for interaction with DVL2 and SUDS3. R135 is subject to Omega-N-methylarginine. Disordered stretches follow at residues 150 to 171 (SEKR…PHIS) and 194 to 251 (TISA…SKPP). Residues K152 and K155 each participate in a glycyl lysine isopeptide (Lys-Gly) (interchain with G-Cter in SUMO2) cross-link. Residues 194–203 (TISAANSCPS) show a composition bias toward polar residues. S230 carries the phosphoserine modification. Residues 233–249 (ENEKEASGGDSPKDDSK) show a composition bias toward basic and acidic residues. Residues 249-344 (KPPYSYAQLI…EQAFRKRRPR (96 aa)) constitute a DNA-binding region (fork-head). Positions 291-309 (KGWQNSIRHNLSLNRYFIK) are DNA-binding; major groove. Mg(2+)-binding residues include L301, S302, N304, and F307. DNA-binding; minor groove regions lie at residues 319–323 (KGSFW) and 339–344 (RKRRPR). Residues 350–399 (RTPLGPLSSRSAPASPNHAGVLSAHSSGAQTPESLSREGSPAPLEPEPGA) are disordered. The residue at position 364 (S364) is a Phosphoserine. Over residues 373–383 (AHSSGAQTPES) the composition is skewed to polar residues. A phosphoserine mark is found at S389, S415, and S419. Residue K518 forms a Glycyl lysine isopeptide (Lys-Gly) (interchain with G-Cter in SUMO2) linkage. S590 carries the phosphoserine modification. Polar residues predominate over residues 601–614 (ASASLPTKRQNGDQ). The interval 601-623 (ASASLPTKRQNGDQAEQPELKRV) is disordered. Residue K624 forms a Glycyl lysine isopeptide (Lys-Gly) (interchain with G-Cter in SUMO2) linkage.

Component of SIN3A-, but not SIN3B-, containing multiprotein complexes. Interacts with DVL1, DVL2 (when phosphorylated) and DVL3; the interaction induces DVL2 nuclear translocation. Interacts with SUDS3. Interacts with BAP1 (when phosphorylated); leading to recruit the PR-DUB complex and repress FOXK2 target genes. Accessory component of the polycomb repressive deubiquitinase (PR-DUB) complex, at least composed of BAP1, one of ASXL1, ASXL2 or (probably) ASXL3 and one of MBD5 or MBD6. The PR-DUB core associates with a number of accessory proteins, including FOXK1, FOXK2, KDM1B, HCFC1 and OGT. Post-translationally, hyperphosphorylated during mitosis by CDK1 and, to a lower extent, CDK2. Phosphorylation at Ser-364 and Ser-419 affects stability by promoting degradation. As to expression, expressed in a wide range of adult brain regions, namely the piriform cortex, the major islands of Calleja and cells lining the lateral ventricles, the bed nucleus of stria terminalis, the paraventricular thalamic nucleus, habenula and all structures of the hippocampus. Also present in the hypothalamus, cerebral cortex and in the Purkinje cell layer in the cerebellum. Additionally expressed in dopamine neurons of the substantia and more sparsely in the ventral tegmental area.

The protein resides in the nucleus. It is found in the cytoplasm. Functionally, transcriptional regulator involved in different processes such as glucose metabolism, aerobic glycolysis and autophagy. Recognizes and binds the forkhead DNA sequence motif (5'-GTAAACA-3') and can both act as a transcription activator or repressor, depending on the context. Together with FOXK1, acts as a key regulator of metabolic reprogramming towards aerobic glycolysis, a process in which glucose is converted to lactate in the presence of oxygen. Acts by promoting expression of enzymes for glycolysis (such as hexokinase-2 (HK2), phosphofructokinase, pyruvate kinase (PKLR) and lactate dehydrogenase), while suppressing further oxidation of pyruvate in the mitochondria by up-regulating pyruvate dehydrogenase kinases PDK1 and PDK4. Probably plays a role in gluconeogenesis during overnight fasting, when lactate from white adipose tissue and muscle is the main substrate. Together with FOXK1, acts as a negative regulator of autophagy in skeletal muscle: in response to starvation, enters the nucleus, binds the promoters of autophagy genes and represses their expression, preventing proteolysis of skeletal muscle proteins. In addition to the 5'-GTAAACA-3' DNA motif, also binds the 5'-TGANTCA-3' palindromic DNA motif, and co-associates with JUN/AP-1 to activate transcription. Also able to bind to a minimal DNA heteroduplex containing a G/T-mismatch with 5'-TRT[G/T]NB-3' sequence. Binds to NFAT-like motifs (purine-rich) in the IL2 promoter. Positively regulates WNT/beta-catenin signaling by translocating DVL proteins into the nucleus. Accessory component of the polycomb repressive deubiquitinase (PR-DUB) complex; recruits the PR-DUB complex to specific FOXK2-bound genes. The polypeptide is Forkhead box protein K2 (Mus musculus (Mouse)).